Here is a 523-residue protein sequence, read N- to C-terminus: Alanine aminotransferase 2 (523 aa).

Residues 1–25 are disordered; the sequence is MQRAAALVRRGCGPRTPSSWGRSQS. Residues A187, S188, Y216, N271, and S338 each contribute to the pyridoxal 5'-phosphate site. Position 341 is an N6-(pyridoxal phosphate)lysine (K341). R350 contacts pyridoxal 5'-phosphate. N6-acetyllysine occurs at positions 415, 505, and 512.

This sequence belongs to the class-I pyridoxal-phosphate-dependent aminotransferase family. Alanine aminotransferase subfamily. Homodimer. The cofactor is pyridoxal 5'-phosphate. As to expression, expressed at high levels in muscle, adipose tissue, kidney and brain and at lower levels in the liver and breast.

The catalysed reaction is L-alanine + 2-oxoglutarate = pyruvate + L-glutamate. It functions in the pathway amino-acid degradation; L-alanine degradation via transaminase pathway; pyruvate from L-alanine: step 1/1. Functionally, catalyzes the reversible transamination between alanine and 2-oxoglutarate to form pyruvate and glutamate. The sequence is that of Alanine aminotransferase 2 (GPT2) from Homo sapiens (Human).